The chain runs to 452 residues: Exodeoxyribonuclease 7 large subunit (452 aa).

Belongs to the XseA family. Heterooligomer composed of large and small subunits.

The protein localises to the cytoplasm. The enzyme catalyses Exonucleolytic cleavage in either 5'- to 3'- or 3'- to 5'-direction to yield nucleoside 5'-phosphates.. Functionally, bidirectionally degrades single-stranded DNA into large acid-insoluble oligonucleotides, which are then degraded further into small acid-soluble oligonucleotides. This chain is Exodeoxyribonuclease 7 large subunit, found in Bacillus thuringiensis (strain Al Hakam).